A 732-amino-acid chain; its full sequence is Probable boron transporter 3 (732 aa).

Position 1 is an N-acetylmethionine (Met1). The Cytoplasmic segment spans residues 1 to 37 (MDEAESFVPFQGIKKDVKGRLNCYKQDWISGLRAGFR). A helical membrane pass occupies residues 38–58 (ILAPTTYIFFASAIPVITFGE). The Extracellular segment spans residues 59 to 77 (QLERDTDGKITAVQTLVST). A helical membrane pass occupies residues 78-98 (ALCGVIHSIIGGQPLLILGVA). Topologically, residues 99-123 (EPTVIMYTFMFNFAKSRTDLGSNLF) are cytoplasmic. A helical transmembrane segment spans residues 124 to 144 (LAWTGWVCLWTGLLLFLLAVL). The Extracellular portion of the chain corresponds to 145 to 157 (GACTFINRFTRLA). Residues 158–178 (GELFGILIAMLFMQEAIRGIV) form a helical membrane-spanning segment. Residues 179–197 (DEFGVPGRTNPRSAEFQPA) are Cytoplasmic-facing. A helical membrane pass occupies residues 198–218 (WVFANGMFGLVLSSGLLYTGL). Topologically, residues 219-234 (KSRKARSWRFGAEWLR) are extracellular. The helical transmembrane segment at 235–255 (GFIADYGVPVMVVVWTCISYI) threads the bilayer. Over 256-291 (PWKSVPQGIPRRLVSPNPWSPGAYQNWTVIKEMVDV) the chain is Cytoplasmic. The chain crosses the membrane as a helical span at residues 292-312 (PVLYILLAVVPASMIAVLYYF). At 313–339 (DHSVASQLAQQEDFNLRKPPAYHYDLF) the chain is on the extracellular side. A helical transmembrane segment spans residues 340–360 (LLGFLTILCGLIGIPPSNGVI). The Cytoplasmic segment spans residues 361–463 (PQSPMHTKSL…ILPVEVKEQR (103 aa)). The chain crosses the membrane as a helical span at residues 464–484 (VSNFLQAMMVAGCVAAMPLIK). Residues 485–556 (RIPSSVLWGY…LFQTAYLLVC (72 aa)) are Extracellular-facing. The chain crosses the membrane as a helical span at residues 557–577 (FGITWVPVAGVLFPLMIMFLV). Over 578–732 (PVRQYVLPNF…QRLSNLGKSV (155 aa)) the chain is Cytoplasmic. The tract at residues 695-732 (GGGEISPRSSAGRAPFSPRSATGGGGGEQRLSNLGKSV) is disordered.

It belongs to the anion exchanger (TC 2.A.31.3) family.

The protein resides in the membrane. In terms of biological role, probable boron transporter. Boron is essential for maintaining the integrity of plants cell walls. The protein is Probable boron transporter 3 (BOR3) of Arabidopsis thaliana (Mouse-ear cress).